The chain runs to 383 residues: Bifunctional enzyme IspD/IspF (383 aa).

Positions 1–226 (MKIAAVIVAA…ERQIMSETIT (226 aa)) are 2-C-methyl-D-erythritol 4-phosphate cytidylyltransferase. The segment at 227-383 (VTGQGYDVHR…QAIVTARLTT (157 aa)) is 2-C-methyl-D-erythritol 2,4-cyclodiphosphate synthase. A divalent metal cation contacts are provided by D233 and H235. 4-CDP-2-C-methyl-D-erythritol 2-phosphate contacts are provided by residues 233–235 (DVH) and 259–260 (HS). Residue H267 participates in a divalent metal cation binding. 4-CDP-2-C-methyl-D-erythritol 2-phosphate-binding positions include 281-283 (DIG), 357-360 (TTTE), F364, and R367.

In the N-terminal section; belongs to the IspD/TarI cytidylyltransferase family. IspD subfamily. The protein in the C-terminal section; belongs to the IspF family. Requires a divalent metal cation as cofactor.

It carries out the reaction 2-C-methyl-D-erythritol 4-phosphate + CTP + H(+) = 4-CDP-2-C-methyl-D-erythritol + diphosphate. It catalyses the reaction 4-CDP-2-C-methyl-D-erythritol 2-phosphate = 2-C-methyl-D-erythritol 2,4-cyclic diphosphate + CMP. It functions in the pathway isoprenoid biosynthesis; isopentenyl diphosphate biosynthesis via DXP pathway; isopentenyl diphosphate from 1-deoxy-D-xylulose 5-phosphate: step 2/6. Its pathway is isoprenoid biosynthesis; isopentenyl diphosphate biosynthesis via DXP pathway; isopentenyl diphosphate from 1-deoxy-D-xylulose 5-phosphate: step 4/6. Functionally, bifunctional enzyme that catalyzes the formation of 4-diphosphocytidyl-2-C-methyl-D-erythritol from CTP and 2-C-methyl-D-erythritol 4-phosphate (MEP) (IspD), and catalyzes the conversion of 4-diphosphocytidyl-2-C-methyl-D-erythritol 2-phosphate (CDP-ME2P) to 2-C-methyl-D-erythritol 2,4-cyclodiphosphate (ME-CPP) with a corresponding release of cytidine 5-monophosphate (CMP) (IspF). This Maricaulis maris (strain MCS10) (Caulobacter maris) protein is Bifunctional enzyme IspD/IspF.